Consider the following 157-residue polypeptide: 2-C-methyl-D-erythritol 2,4-cyclodiphosphate synthase (157 aa).

A divalent metal cation contacts are provided by Asp-8 and His-10. 4-CDP-2-C-methyl-D-erythritol 2-phosphate-binding positions include 8 to 10 (DVH) and 34 to 35 (HS). An a divalent metal cation-binding site is contributed by His-42. Residues 56-58 (DIG), 61-65 (FPDTD), 100-106 (AQAPKMA), 132-135 (TTEE), Phe-139, and Arg-142 contribute to the 4-CDP-2-C-methyl-D-erythritol 2-phosphate site.

This sequence belongs to the IspF family. In terms of assembly, homotrimer. The cofactor is a divalent metal cation.

It catalyses the reaction 4-CDP-2-C-methyl-D-erythritol 2-phosphate = 2-C-methyl-D-erythritol 2,4-cyclic diphosphate + CMP. The protein operates within isoprenoid biosynthesis; isopentenyl diphosphate biosynthesis via DXP pathway; isopentenyl diphosphate from 1-deoxy-D-xylulose 5-phosphate: step 4/6. Its function is as follows. Involved in the biosynthesis of isopentenyl diphosphate (IPP) and dimethylallyl diphosphate (DMAPP), two major building blocks of isoprenoid compounds. Catalyzes the conversion of 4-diphosphocytidyl-2-C-methyl-D-erythritol 2-phosphate (CDP-ME2P) to 2-C-methyl-D-erythritol 2,4-cyclodiphosphate (ME-CPP) with a corresponding release of cytidine 5-monophosphate (CMP). The protein is 2-C-methyl-D-erythritol 2,4-cyclodiphosphate synthase of Pseudomonas entomophila (strain L48).